Here is a 46-residue protein sequence, read N- to C-terminus: Protein PsbN (46 aa).

Residues 7 to 27 traverse the membrane as a helical segment; sequence GLSIAITFAVILLALTGFSIY.

It belongs to the PsbN family.

Its subcellular location is the cellular thylakoid membrane. In terms of biological role, may play a role in photosystem I and II biogenesis. This Synechococcus elongatus (strain ATCC 33912 / PCC 7942 / FACHB-805) (Anacystis nidulans R2) protein is Protein PsbN.